A 225-amino-acid polypeptide reads, in one-letter code: 2-C-methyl-D-erythritol 4-phosphate cytidylyltransferase (225 aa).

The protein belongs to the IspD/TarI cytidylyltransferase family. IspD subfamily.

It catalyses the reaction 2-C-methyl-D-erythritol 4-phosphate + CTP + H(+) = 4-CDP-2-C-methyl-D-erythritol + diphosphate. It functions in the pathway isoprenoid biosynthesis; isopentenyl diphosphate biosynthesis via DXP pathway; isopentenyl diphosphate from 1-deoxy-D-xylulose 5-phosphate: step 2/6. Catalyzes the formation of 4-diphosphocytidyl-2-C-methyl-D-erythritol from CTP and 2-C-methyl-D-erythritol 4-phosphate (MEP). The protein is 2-C-methyl-D-erythritol 4-phosphate cytidylyltransferase of Haemophilus influenzae (strain 86-028NP).